The sequence spans 308 residues: tRNA dimethylallyltransferase (308 aa).

Residue 16–23 (GPTASGKT) participates in ATP binding. 18–23 (TASGKT) contributes to the substrate binding site. The interval 41–44 (DSQQ) is interaction with substrate tRNA.

It belongs to the IPP transferase family. Monomer. It depends on Mg(2+) as a cofactor.

The catalysed reaction is adenosine(37) in tRNA + dimethylallyl diphosphate = N(6)-dimethylallyladenosine(37) in tRNA + diphosphate. Its function is as follows. Catalyzes the transfer of a dimethylallyl group onto the adenine at position 37 in tRNAs that read codons beginning with uridine, leading to the formation of N6-(dimethylallyl)adenosine (i(6)A). This Myxococcus xanthus (strain DK1622) protein is tRNA dimethylallyltransferase.